The following is a 793-amino-acid chain: Protein zer-1 homolog (793 aa).

LRR repeat units follow at residues 84 to 108 (RTSLKIVNLRNSTLSSIGLETLMRH), 187 to 210 (LHDLGHLDLTSCVLANFSLEALGS), and 269 to 294 (LRHLTHLDISGTNLAGNGVATKESTT).

Belongs to the zyg-11 family.

Serves as substrate adapter subunit in an E3 ubiquitin ligase complex CG12084-cul-2-elongin BC. Targets substrates bearing N-terminal glycine degrons for proteasomal degradation. This Drosophila melanogaster (Fruit fly) protein is Protein zer-1 homolog.